Reading from the N-terminus, the 360-residue chain is tRNA-specific 2-thiouridylase MnmA (360 aa).

ATP-binding positions include 9-16 and L35; that span reads AMSGGVDS. Residue C104 is the Nucleophile of the active site. A disulfide bridge links C104 with C197. G128 provides a ligand contact to ATP. The interval 147-149 is interaction with tRNA; it reads KDQ. Catalysis depends on C197, which acts as the Cysteine persulfide intermediate.

This sequence belongs to the MnmA/TRMU family.

It localises to the cytoplasm. It carries out the reaction S-sulfanyl-L-cysteinyl-[protein] + uridine(34) in tRNA + AH2 + ATP = 2-thiouridine(34) in tRNA + L-cysteinyl-[protein] + A + AMP + diphosphate + H(+). In terms of biological role, catalyzes the 2-thiolation of uridine at the wobble position (U34) of tRNA, leading to the formation of s(2)U34. In Salinispora tropica (strain ATCC BAA-916 / DSM 44818 / JCM 13857 / NBRC 105044 / CNB-440), this protein is tRNA-specific 2-thiouridylase MnmA.